The primary structure comprises 275 residues: Ribosomal protein L11 methyltransferase (275 aa).

Positions 123, 146, 167, and 208 each coordinate S-adenosyl-L-methionine.

This sequence belongs to the methyltransferase superfamily. PrmA family.

The protein localises to the cytoplasm. The enzyme catalyses L-lysyl-[protein] + 3 S-adenosyl-L-methionine = N(6),N(6),N(6)-trimethyl-L-lysyl-[protein] + 3 S-adenosyl-L-homocysteine + 3 H(+). Methylates ribosomal protein L11. This chain is Ribosomal protein L11 methyltransferase, found in Campylobacter fetus subsp. fetus (strain 82-40).